A 94-amino-acid polypeptide reads, in one-letter code: Co-chaperonin GroES (94 aa).

Belongs to the GroES chaperonin family. As to quaternary structure, heptamer of 7 subunits arranged in a ring. Interacts with the chaperonin GroEL.

It is found in the cytoplasm. Its function is as follows. Together with the chaperonin GroEL, plays an essential role in assisting protein folding. The GroEL-GroES system forms a nano-cage that allows encapsulation of the non-native substrate proteins and provides a physical environment optimized to promote and accelerate protein folding. GroES binds to the apical surface of the GroEL ring, thereby capping the opening of the GroEL channel. In Listeria welshimeri serovar 6b (strain ATCC 35897 / DSM 20650 / CCUG 15529 / CIP 8149 / NCTC 11857 / SLCC 5334 / V8), this protein is Co-chaperonin GroES.